Here is a 778-residue protein sequence, read N- to C-terminus: Preaspterpenacid I synthase sttA (778 aa).

The interval 4-359 (ISDVMKHCVP…RYHRTDLATT (356 aa)) is sesterterpenoid synthase. D105 contributes to the Mg(2+) binding site. Residue D105 coordinates substrate. Residues 211 to 214 (RVNE) form a substrate region. N255 serves as a coordination point for substrate. Substrate regions lie at residues 259 to 263 (SFPKE) and 350 to 351 (RY). The segment at 360-774 (AEDRATLIGK…RMMLLGMGPK (415 aa)) is geranylfarneyl diphosphate synthase. The interval 423–445 (AFKKSNPRNGKQNGTEGSKGTFT) is disordered. The span at 429–445 (PRNGKQNGTEGSKGTFT) shows a compositional bias: polar residues. K493, R496, and H525 together coordinate isopentenyl diphosphate. Positions 532 and 536 each coordinate Mg(2+). R541 is a binding site for dimethylallyl diphosphate. An isopentenyl diphosphate-binding site is contributed by R542. Positions 619, 620, 657, 664, and 674 each coordinate dimethylallyl diphosphate.

This sequence in the N-terminal section; belongs to the terpene synthase family. The protein in the C-terminal section; belongs to the FPP/GGPP synthase family.

The catalysed reaction is 4 isopentenyl diphosphate + dimethylallyl diphosphate = (2E,6E,10E,14E)-geranylfarnesyl diphosphate + 4 diphosphate. It carries out the reaction (2E,6E,10E,14E)-geranylfarnesyl diphosphate + H2O = preaspterpenacid acid I + diphosphate. It participates in secondary metabolite biosynthesis; terpenoid biosynthesis. Its function is as follows. Sesterterpenoid synthase; part of the gene cluster that mediates the biosynthesis of aspterpenacids. Performs both prenyl transferase and terpene cyclase activity, converting isopentenyl diphosphate and dimethylallyl diphosphate into geranylfarnesyl diphosphate (GFPP) and then converting GFPP into preaspterpenacid I. C22-oxidative modification of preaspterpenacid I by the cytochrome P450 monooxygenase sttB then leads to preaspterpenacid II. It has still to be determined how preaspterpenacid II is further modified to produce aspterpenacids. This is Preaspterpenacid I synthase sttA from Aspergillus terreus.